The following is a 382-amino-acid chain: Non-structural maintenance of chromosomes element 4 homolog A (382 aa).

Over residues 1–21 the composition is skewed to basic and acidic residues; the sequence is MSGDSSGRRPEGRGRGRDPHR. The interval 1 to 80 is disordered; it reads MSGDSSGRRP…ASLEEETDPS (80 aa). Residues 31-41 show a composition bias toward low complexity; it reads RSPLSPGSRRG. Basic and acidic residues predominate over residues 42-55; the sequence is AAPERREAPERPGL. A compositionally biased stretch (acidic residues) spans 56–78; sequence EDTEPSDSGDEMIDPASLEEETD. A Phosphothreonine modification is found at threonine 342. Serine 374 is subject to Phosphoserine.

This sequence belongs to the NSE4 family. As to quaternary structure, component of the SMC5-SMC6 complex which consists at least of SMC5, SMC6, NSMCE2, NSMCE1, NSMCE4A or EID3 and NSMCE3. NSMCE1, NSMCE4A or EID3 and NSMCE3 probably form a subcomplex that bridges the head domains of the SMC5:SMC6 heterodimer. Interacts with NSMCE3.

Its subcellular location is the nucleus. It localises to the chromosome. It is found in the telomere. Functionally, component of the SMC5-SMC6 complex, a complex involved in repair of DNA double-strand breaks by homologous recombination. The complex may promote sister chromatid homologous recombination by recruiting the SMC1-SMC3 cohesin complex to double-strand breaks. The complex is required for telomere maintenance via recombination and mediates sumoylation of shelterin complex (telosome) components. The protein is Non-structural maintenance of chromosomes element 4 homolog A (NSMCE4A) of Bos taurus (Bovine).